The sequence spans 194 residues: Imidazoleglycerol-phosphate dehydratase (194 aa).

This sequence belongs to the imidazoleglycerol-phosphate dehydratase family.

Its subcellular location is the cytoplasm. It catalyses the reaction D-erythro-1-(imidazol-4-yl)glycerol 3-phosphate = 3-(imidazol-4-yl)-2-oxopropyl phosphate + H2O. It participates in amino-acid biosynthesis; L-histidine biosynthesis; L-histidine from 5-phospho-alpha-D-ribose 1-diphosphate: step 6/9. The sequence is that of Imidazoleglycerol-phosphate dehydratase from Bacillus licheniformis (strain ATCC 14580 / DSM 13 / JCM 2505 / CCUG 7422 / NBRC 12200 / NCIMB 9375 / NCTC 10341 / NRRL NRS-1264 / Gibson 46).